Here is a 233-residue protein sequence, read N- to C-terminus: Large ribosomal subunit protein uL1 (233 aa).

The protein belongs to the universal ribosomal protein uL1 family. Part of the 50S ribosomal subunit.

Functionally, binds directly to 23S rRNA. The L1 stalk is quite mobile in the ribosome, and is involved in E site tRNA release. In terms of biological role, protein L1 is also a translational repressor protein, it controls the translation of the L11 operon by binding to its mRNA. The chain is Large ribosomal subunit protein uL1 from Proteus vulgaris.